The following is a 151-amino-acid chain: Large ribosomal subunit protein bL9 (151 aa).

This sequence belongs to the bacterial ribosomal protein bL9 family.

Functionally, binds to the 23S rRNA. The polypeptide is Large ribosomal subunit protein bL9 (Francisella philomiragia subsp. philomiragia (strain ATCC 25017 / CCUG 19701 / FSC 153 / O#319-036)).